The following is a 130-amino-acid chain: Ribosome-binding factor A (130 aa).

Residues 111-130 (RDLDDVGPGATSSDEDAEQR) are disordered.

Belongs to the RbfA family. Monomer. Binds 30S ribosomal subunits, but not 50S ribosomal subunits or 70S ribosomes.

The protein resides in the cytoplasm. In terms of biological role, one of several proteins that assist in the late maturation steps of the functional core of the 30S ribosomal subunit. Associates with free 30S ribosomal subunits (but not with 30S subunits that are part of 70S ribosomes or polysomes). Required for efficient processing of 16S rRNA. May interact with the 5'-terminal helix region of 16S rRNA. This is Ribosome-binding factor A from Xanthomonas oryzae pv. oryzae (strain MAFF 311018).